Consider the following 103-residue polypeptide: uncharacterized protein (103 aa).

The next 2 membrane-spanning stretches (helical) occupy residues 42–62 (PFPLLRLLSVTLFISSLVLLA) and 65–85 (TGTLNIFSYSYVVMVVLFICA).

Its subcellular location is the membrane. This is an uncharacterized protein from Saccharomyces cerevisiae (strain ATCC 204508 / S288c) (Baker's yeast).